A 380-amino-acid chain; its full sequence is Transcription factor RF2a (380 aa).

The tract at residues 1–57 (MNREKSPIPGDGGDGLPPQATRRAGPPAAAAAAEYDISRMPDFPTRNPGHRRAHSEI) is disordered. Residues 16–33 (LPPQATRRAGPPAAAAAA) are compositionally biased toward low complexity. The activation of RTBV promoter stretch occupies residues 56 to 108 (EILSLPEDLDLCAAGGGDGPSLSDENDEELFSMFLDVEKLNSTCGASSEAEAE). Residues 181 to 244 (DPKRAKRIWA…SGLTTENSEL (64 aa)) enclose the bZIP domain. Residues 183–204 (KRAKRIWANRQSAARSKERKMR) form a basic motif region. Residues 209–244 (LERKVQTLQTEATTLSAQLALLQRDTSGLTTENSEL) form a leucine-zipper region. An interaction with TBP2 region spans residues 283-357 (GGMMMNFGGM…AQQLQQAARD (75 aa)). Residues 326–355 (QAQQQQVLHPQHQQQQPLHPLQAQQLQQAA) are compositionally biased toward low complexity. Residues 326–380 (QAQQQQVLHPQHQQQQPLHPLQAQQLQQAARDLKMKSPMGGQSQWGDGKSGSSGN) form a disordered region.

The protein belongs to the bZIP family. As to quaternary structure, binds DNA as a homodimer or as a heterodimer with RF2b. The heterodimer binds stronger to DNA than the homodimer. Interacts with TBP2. As to expression, expressed at high levels in levels in leaf sheath, moderate levels in leaf blade, but not in roots. Predominantly expressed in vascular tissues.

It localises to the nucleus. Transcription factor probably involved in vascular development and shoot tissue organization. Binds to the DNA sequence 5'-CCGAGTGTGCCCCTGG-3' present in the promoter region Box II of the phloem-specific rice tungro bacilliform virus (RTBV) promoter. May regulate tissue-specific expression of the RTBV promoter and virus replication. The protein is Transcription factor RF2a (RF2a) of Oryza sativa subsp. japonica (Rice).